The following is a 585-amino-acid chain: Mitochondrial sodium/calcium exchanger protein (585 aa).

Positions 1–26 are cleaved as a signal peptide; the sequence is MASRWLALLWAPVFLCVALILETASG. At 27-95 the chain is on the extracellular side; it reads TGDPSTKAHG…GIFCYFPPNL (69 aa). An N-linked (GlcNAc...) asparagine glycan is attached at asparagine 46. The chain crosses the membrane as a helical span at residues 96 to 116; it reads LPLAITLYVFWLLYLFLILGV. The Cytoplasmic portion of the chain corresponds to 117–140; the sequence is TAAKFFCPNLSAISTNLKLSHNVA. Residues 141-161 form a helical membrane-spanning segment; the sequence is GVTFLAFGNGAPDIFSALVAF. The Extracellular segment spans residues 162–168; the sequence is SDPRTAG. The chain crosses the membrane as a helical span at residues 169 to 189; that stretch reads LAIGALFGAGVLVTTVVAGGI. Over 190-205 the chain is Cytoplasmic; it reads TILHPFMAASRPFLRD. A helical transmembrane segment spans residues 206–226; it reads IAFYMVAVFLTFTALYLGRIT. Topologically, residues 227–229 are extracellular; sequence LTW. The chain crosses the membrane as a helical span at residues 230 to 250; it reads ALGYLGLYVFYVVTVIICTWV. The Cytoplasmic portion of the chain corresponds to 251–325; the sequence is YQRQRSRSLV…KWRTQSISWR (75 aa). Serine 258 carries the post-translational modification Phosphoserine; by PKA. The chain crosses the membrane as a helical span at residues 326–346; it reads VLKVVKLPVEFLLLLTVPVVD. Topologically, residues 347–360 are extracellular; that stretch reads PDKDDRNWKRPLNC. Residues 361 to 381 form a helical membrane-spanning segment; it reads LQLVISPLVLVLTLQSGVYGI. At 382-383 the chain is on the cytoplasmic side; sequence YE. Residues 384–404 traverse the membrane as a helical segment; the sequence is IGGLLPVWAVVVIVGTALASV. Over 405–416 the chain is Extracellular; sequence TFFATSNREPPR. Residues 417–437 form a helical membrane-spanning segment; the sequence is LHWLFAFLGFLTSALWINAAA. Residues 438-445 lie on the Cytoplasmic side of the membrane; sequence TEVVNILR. Residues 446–466 form a helical membrane-spanning segment; sequence SLGVIFRLSNTVLGLTLLAWG. At 467 to 491 the chain is on the extracellular side; it reads NSIGDAFSDFTLARQGYPRMAFSAC. A helical membrane pass occupies residues 492 to 512; sequence FGGIIFNILVGVGLGCLLQII. The Cytoplasmic segment spans residues 513–525; sequence RNHVVEVKLEPDG. A helical membrane pass occupies residues 526–546; the sequence is LLVWVLASALGLSLIFSLVSV. The Extracellular segment spans residues 547–559; it reads PLQCFQLSKAYGL. A helical transmembrane segment spans residues 560–580; that stretch reads CLLLFYICFLVVVLLTEFGVI. Over 581–585 the chain is Cytoplasmic; the sequence is HLKKA.

This sequence belongs to the Ca(2+):cation antiporter (CaCA) (TC 2.A.19) family. SLC24A subfamily. Phosphorylation at Ser-258 by PKA prevents calcium overload. Ubiquitously expressed. Expressed in dental tissues.

Its subcellular location is the mitochondrion inner membrane. The protein localises to the cell membrane. The enzyme catalyses Ca(2+)(in) + 3 Na(+)(out) = Ca(2+)(out) + 3 Na(+)(in). The catalysed reaction is 3 Li(+)(out) + Ca(2+)(in) = 3 Li(+)(in) + Ca(2+)(out). Its activity is regulated as follows. Inhibited by the sodium/calcium exchanger inhibitor CGP-37157. Strongly inhibited by zinc. Functionally, mitochondrial sodium/calcium antiporter that mediates sodium-dependent calcium efflux from mitochondrion, by mediating the exchange of 3 sodium ions per 1 calcium ion. Plays a central role in mitochondrial calcium homeostasis by mediating mitochondrial calcium extrusion: calcium efflux is essential for mitochondrial function and cell survival, notably in cardiomyocytes. Regulates rates of glucose-dependent insulin secretion in pancreatic beta-cells during the first phase of insulin secretion: acts by mediating efflux of calcium from mitochondrion, thereby affecting cytoplasmic calcium responses. Required for store-operated Ca(2+) entry (SOCE) and Ca(2+) release-activated Ca(2+) (CRAC) channel regulation: sodium transport by SLC8B1 leads to promote calcium-shuttling that modulates mitochondrial redox status, thereby regulating SOCE activity. Involved in B-lymphocyte chemotaxis. Able to transport Ca(2+) in exchange of either Li(+) or Na(+), explaining how Li(+) catalyzes Ca(2+) exchange. In contrast to other members of the family its function is independent of K(+). The polypeptide is Mitochondrial sodium/calcium exchanger protein (Mus musculus (Mouse)).